Reading from the N-terminus, the 409-residue chain is Argininosuccinate synthase (409 aa).

9-17 serves as a coordination point for ATP; that stretch reads AYSGGLDTS. Tyrosine 86 provides a ligand contact to L-citrulline. Glycine 116 contacts ATP. Residues threonine 118, asparagine 122, and aspartate 123 each contribute to the L-aspartate site. Residue asparagine 122 coordinates L-citrulline. The L-citrulline site is built by arginine 126, serine 174, serine 183, glutamate 259, and tyrosine 271.

This sequence belongs to the argininosuccinate synthase family. Type 1 subfamily. In terms of assembly, homotetramer.

The protein resides in the cytoplasm. The catalysed reaction is L-citrulline + L-aspartate + ATP = 2-(N(omega)-L-arginino)succinate + AMP + diphosphate + H(+). The protein operates within amino-acid biosynthesis; L-arginine biosynthesis; L-arginine from L-ornithine and carbamoyl phosphate: step 2/3. This Halalkalibacterium halodurans (strain ATCC BAA-125 / DSM 18197 / FERM 7344 / JCM 9153 / C-125) (Bacillus halodurans) protein is Argininosuccinate synthase.